A 254-amino-acid polypeptide reads, in one-letter code: MGRGRVEMKRIENKINRQVTFSKRRAGLLKKAHEISILCDAEVSLIVFSHKGKLFEYSSESCMEKVLERYERYSYAEKQLKAPDSHVNAQTNWSMEYSRLKAKIELLERNQRHYLGEDLESISIKELQNLEQQLDTSLKHIRSRKNQLMHESLNHLQRKEKEILEENSMLTKQIKERESILRTHQNQSEQQNRSHHVAPQPQPQLNPYMISHQASPFLSMGGMYQGEDPTAVRRNRLDLTLEPIYNCNLGYFAA.

In terms of domain architecture, MADS-box spans 1 to 61 (MGRGRVEMKR…GKLFEYSSES (61 aa)). One can recognise a K-box domain in the interval 90-180 (QTNWSMEYSR…TKQIKERESI (91 aa)). Residues 182–191 (RTHQNQSEQQ) show a composition bias toward polar residues. The disordered stretch occupies residues 182-205 (RTHQNQSEQQNRSHHVAPQPQPQL).

In terms of assembly, homodimer capable of binding to CArG-box sequences.

Its subcellular location is the nucleus. Its function is as follows. Probable transcription factor that promotes early floral meristem identity in synergy with APETALA1, FRUITFULL and LEAFY. Is required subsequently for the transition of an inflorescence meristem into a floral meristem. Seems to be partially redundant to the function of APETALA1. This is Transcription factor CAULIFLOWER (CAL) from Brassica rapa subsp. pekinensis (Chinese cabbage).